The primary structure comprises 332 residues: Glycine betaine-binding periplasmic protein OusX (332 aa).

The first 21 residues, 1-21, serve as a signal peptide directing secretion; sequence MRNISMATLALTTVLSTGLFA.

In terms of assembly, the complex is composed of two ATP-binding proteins (OusV), two transmembrane proteins (OusW) and a solute-binding protein (OusX).

The protein localises to the periplasm. Functionally, part of the OusB ABC transporter complex involved in glycine betaine and choline uptake. Binds glycine betaine. The chain is Glycine betaine-binding periplasmic protein OusX from Dickeya dadantii (strain 3937) (Erwinia chrysanthemi (strain 3937)).